The sequence spans 249 residues: MSLVPNTICLFDVDGTLTKPRNVITPEMKDFLAGLRTKVELGVVGGSDINKIKEQLGENCINEFHYLFAENGLLSFKDGSLLATQDIKKFLGEENIKKFINFVLHYIADLDIPIKRGTFVEFRNGMINISPIGRNCSQQEREEFEKYDLEHKIRPTMVSILKEKFQSLGLQYSIGGQISFDVFPIGWDKTYCLRHLPEDKYKTIYFFGDKTFVGGNDYEIANDPRITKSFTVTSPTDTKNFLSELFYKQ.

Catalysis depends on D12, which acts as the Nucleophile. Residues D12 and D14 each contribute to the Mg(2+) site. The active-site Proton donor/acceptor is the D14. Alpha-D-mannose 1-phosphate contacts are provided by R21, R123, R134, R141, S179, and D181. Residues D209, D223, and T227 each coordinate Mg(2+).

This sequence belongs to the eukaryotic PMM family. In terms of assembly, homodimer.

It is found in the cytoplasm. The catalysed reaction is alpha-D-mannose 1-phosphate = D-mannose 6-phosphate. The protein operates within nucleotide-sugar biosynthesis; GDP-alpha-D-mannose biosynthesis; alpha-D-mannose 1-phosphate from D-fructose 6-phosphate: step 2/2. In terms of biological role, involved in the synthesis of the GDP-mannose and dolichol-phosphate-mannose required for a number of critical mannosyl transfer reactions. This is Phosphomannomutase 1 (pmmA) from Dictyostelium discoideum (Social amoeba).